Here is an 81-residue protein sequence, read N- to C-terminus: Acyl carrier protein (81 aa).

The Carrier domain maps to 2–80; it reads ASNEEILAGL…DAVSYIASAQ (79 aa). Serine 40 bears the O-(pantetheine 4'-phosphoryl)serine mark.

It belongs to the acyl carrier protein (ACP) family. In terms of processing, 4'-phosphopantetheine is transferred from CoA to a specific serine of apo-ACP by AcpS. This modification is essential for activity because fatty acids are bound in thioester linkage to the sulfhydryl of the prosthetic group.

It localises to the cytoplasm. Its pathway is lipid metabolism; fatty acid biosynthesis. Carrier of the growing fatty acid chain in fatty acid biosynthesis. In Renibacterium salmoninarum (strain ATCC 33209 / DSM 20767 / JCM 11484 / NBRC 15589 / NCIMB 2235), this protein is Acyl carrier protein.